A 151-amino-acid chain; its full sequence is Chaperonin GroEL (151 aa).

Aspartate 41–threonine 45 contacts ATP.

Belongs to the chaperonin (HSP60) family. As to quaternary structure, forms a cylinder of 14 subunits composed of two heptameric rings stacked back-to-back. Interacts with the co-chaperonin GroES.

It localises to the cytoplasm. The catalysed reaction is ATP + H2O + a folded polypeptide = ADP + phosphate + an unfolded polypeptide.. Together with its co-chaperonin GroES, plays an essential role in assisting protein folding. The GroEL-GroES system forms a nano-cage that allows encapsulation of the non-native substrate proteins and provides a physical environment optimized to promote and accelerate protein folding. The protein is Chaperonin GroEL of Mycobacteroides chelonae (Mycobacterium chelonae).